Here is an 872-residue protein sequence, read N- to C-terminus: Leucine--tRNA ligase (872 aa).

The 'HIGH' region signature appears at 56–66 (PYPSGNLHMGH). A 'KMSKS' region motif is present at residues 629-633 (KMSKS). Lys-632 lines the ATP pocket.

This sequence belongs to the class-I aminoacyl-tRNA synthetase family.

The protein resides in the cytoplasm. The enzyme catalyses tRNA(Leu) + L-leucine + ATP = L-leucyl-tRNA(Leu) + AMP + diphosphate. This chain is Leucine--tRNA ligase, found in Prochlorococcus marinus (strain MIT 9211).